Here is a 774-residue protein sequence, read N- to C-terminus: Shugoshin (774 aa).

The stretch at serine 41 to leucine 105 forms a coiled coil. 3 disordered regions span residues glycine 106 to arginine 151, serine 205 to leucine 661, and cysteine 676 to leucine 774. Over residues proline 109–tyrosine 120 the composition is skewed to basic and acidic residues. Acidic residues predominate over residues alanine 214–glutamate 224. Polar residues predominate over residues glycine 297–glutamate 318. Positions lysine 382–valine 398 are enriched in basic and acidic residues. The span at glutamate 399 to phenylalanine 409 shows a compositional bias: polar residues. Composition is skewed to basic and acidic residues over residues asparagine 482–phenylalanine 495 and phenylalanine 549–glutamine 558. 2 stretches are compositionally biased toward polar residues: residues proline 595–asparagine 604 and glutamine 640–threonine 651. A compositionally biased stretch (low complexity) spans alanine 706 to proline 722. Residues leucine 743 to glycine 754 show a composition bias toward acidic residues. The span at arginine 765–leucine 774 shows a compositional bias: basic residues.

Belongs to the shugoshin family.

It localises to the nucleus. It is found in the chromosome. Its subcellular location is the centromere. Plays a central role in chromosome cohesion during cell division by preventing premature dissociation of cohesin complex from centromeres after prophase, when most of cohesin complex dissociates from chromosomes arms. The protein is Shugoshin (sgo-1) of Neurospora crassa (strain ATCC 24698 / 74-OR23-1A / CBS 708.71 / DSM 1257 / FGSC 987).